The primary structure comprises 449 residues: Asparagine--tRNA ligase (449 aa).

This sequence belongs to the class-II aminoacyl-tRNA synthetase family. As to quaternary structure, homodimer.

The protein localises to the cytoplasm. The enzyme catalyses tRNA(Asn) + L-asparagine + ATP = L-asparaginyl-tRNA(Asn) + AMP + diphosphate + H(+). In Desulfotalea psychrophila (strain LSv54 / DSM 12343), this protein is Asparagine--tRNA ligase.